A 208-amino-acid chain; its full sequence is N-(5'-phosphoribosyl)anthranilate isomerase (208 aa).

Belongs to the TrpF family.

It catalyses the reaction N-(5-phospho-beta-D-ribosyl)anthranilate = 1-(2-carboxyphenylamino)-1-deoxy-D-ribulose 5-phosphate. It participates in amino-acid biosynthesis; L-tryptophan biosynthesis; L-tryptophan from chorismate: step 3/5. The polypeptide is N-(5'-phosphoribosyl)anthranilate isomerase (Nitrosomonas eutropha (strain DSM 101675 / C91 / Nm57)).